A 248-amino-acid chain; its full sequence is UPF0246 protein RC0754 (248 aa).

This sequence belongs to the UPF0246 family.

In Rickettsia conorii (strain ATCC VR-613 / Malish 7), this protein is UPF0246 protein RC0754.